The primary structure comprises 888 residues: Pumilio homology domain family member 4 (888 aa).

Thr-205, Thr-212, and Thr-252 each carry phosphothreonine. Disordered regions lie at residues 236-270 (KAKK…IPPT) and 467-551 (MNSA…RKIE). Residues 243 to 270 (GANNTAKTRTQSISFDNTPSSTSFIPPT) show a composition bias toward polar residues. Residue Ser-256 is modified to Phosphoserine. Low complexity-rich tracts occupy residues 478 to 499 (NNNS…YNNK) and 521 to 543 (NNNN…NSNS). One can recognise a PUM-HD domain in the interval 539–888 (TNSNSAEKQR…RIIGMLHLDS (350 aa)). 8 Pumilio repeats span residues 563–598 (QYIG…AIFE), 599–634 (ETKD…VLTK), 635–671 (ISSP…IVVD), 672–707 (SLRP…FIFD), 708–743 (AISD…NLCD), 744–783 (KLLA…KIVH), 784–821 (LLKP…EILN), and 823–861 (GGET…RLSE).

Is not essential for haploid growth, but may affect diploid formation. This is Pumilio homology domain family member 4 (PUF4) from Saccharomyces cerevisiae (strain ATCC 204508 / S288c) (Baker's yeast).